We begin with the raw amino-acid sequence, 744 residues long: Phosphoribosylformylglycinamidine synthase subunit PurL (744 aa).

The active site involves His-49. Tyr-52 and Lys-91 together coordinate ATP. Glu-93 is a Mg(2+) binding site. Substrate contacts are provided by residues Ser-94–His-97 and Arg-116. Residue His-95 is the Proton acceptor of the active site. Asp-117 serves as a coordination point for Mg(2+). Position 240 (Gln-240) interacts with substrate. Asp-268 provides a ligand contact to Mg(2+). Position 312–314 (Glu-312–Gln-314) interacts with substrate. ATP is bound by residues Asp-493 and Gly-530. Asn-531 serves as a coordination point for Mg(2+). Residue Ser-533 coordinates substrate.

Belongs to the FGAMS family. As to quaternary structure, monomer. Part of the FGAM synthase complex composed of 1 PurL, 1 PurQ and 2 PurS subunits.

The protein resides in the cytoplasm. The enzyme catalyses N(2)-formyl-N(1)-(5-phospho-beta-D-ribosyl)glycinamide + L-glutamine + ATP + H2O = 2-formamido-N(1)-(5-O-phospho-beta-D-ribosyl)acetamidine + L-glutamate + ADP + phosphate + H(+). It participates in purine metabolism; IMP biosynthesis via de novo pathway; 5-amino-1-(5-phospho-D-ribosyl)imidazole from N(2)-formyl-N(1)-(5-phospho-D-ribosyl)glycinamide: step 1/2. In terms of biological role, part of the phosphoribosylformylglycinamidine synthase complex involved in the purines biosynthetic pathway. Catalyzes the ATP-dependent conversion of formylglycinamide ribonucleotide (FGAR) and glutamine to yield formylglycinamidine ribonucleotide (FGAM) and glutamate. The FGAM synthase complex is composed of three subunits. PurQ produces an ammonia molecule by converting glutamine to glutamate. PurL transfers the ammonia molecule to FGAR to form FGAM in an ATP-dependent manner. PurS interacts with PurQ and PurL and is thought to assist in the transfer of the ammonia molecule from PurQ to PurL. The sequence is that of Phosphoribosylformylglycinamidine synthase subunit PurL from Nitrobacter hamburgensis (strain DSM 10229 / NCIMB 13809 / X14).